The primary structure comprises 164 residues: Phosphopantetheine adenylyltransferase (164 aa).

S10 provides a ligand contact to substrate. ATP is bound by residues 10–11 (SF) and H18. Substrate is bound by residues K42, M74, and R88. ATP is bound by residues 89–91 (GLR), E99, and 124–130 (YFFVSAR).

Belongs to the bacterial CoaD family. In terms of assembly, homohexamer. The cofactor is Mg(2+).

Its subcellular location is the cytoplasm. The catalysed reaction is (R)-4'-phosphopantetheine + ATP + H(+) = 3'-dephospho-CoA + diphosphate. Its pathway is cofactor biosynthesis; coenzyme A biosynthesis; CoA from (R)-pantothenate: step 4/5. Functionally, reversibly transfers an adenylyl group from ATP to 4'-phosphopantetheine, yielding dephospho-CoA (dPCoA) and pyrophosphate. This chain is Phosphopantetheine adenylyltransferase, found in Anaeromyxobacter dehalogenans (strain 2CP-C).